The following is a 450-amino-acid chain: MKYRYLPQTDQDKREMLETLGISSVEELFADIPEEVRFKGALNIPEALSEPDLVKYFTHLANKNVNFSTHVNFLGAGVYQHYTPSTVNHMLLRGEFFTAYTPYQPEISQGELQAIFEFQTMVCELTGMEVANSSMYDGATSLAEAAMMAAGHTGKKRVIVSRAVHPEARGVLKTYAYGQNVELVEVGINSDGVTDTAALEALVDENTAAIIVQYPNFFGNVEDLGAIETIAHGKGALLITSSNPLALGVLEAPGKLGADIVVGDMQPFGIPASFGGPHCGYFATTTKLMRKMPGRIVGQTKDENGKRGFVLTLQAREQHIRREKATSNICSNQALLALAASIAMTALGKQGVQEMAMMNLQKAHYAKNALQAKGLEIVFTSPFFNEFVVKLNKPVAEVNKGLLAAGIIGGYDLGLDYPEFANHTLLAVTELRTKEEIDILAAELEAITRA.

This sequence belongs to the GcvP family. N-terminal subunit subfamily. The glycine cleavage system is composed of four proteins: P, T, L and H. In this organism, the P 'protein' is a heterodimer of two subunits.

It carries out the reaction N(6)-[(R)-lipoyl]-L-lysyl-[glycine-cleavage complex H protein] + glycine + H(+) = N(6)-[(R)-S(8)-aminomethyldihydrolipoyl]-L-lysyl-[glycine-cleavage complex H protein] + CO2. Its function is as follows. The glycine cleavage system catalyzes the degradation of glycine. The P protein binds the alpha-amino group of glycine through its pyridoxal phosphate cofactor; CO(2) is released and the remaining methylamine moiety is then transferred to the lipoamide cofactor of the H protein. This chain is Probable glycine dehydrogenase (decarboxylating) subunit 1, found in Brevibacillus brevis (strain 47 / JCM 6285 / NBRC 100599).